The primary structure comprises 145 residues: Basic phospholipase A2 PC10 (145 aa).

The signal sequence occupies residues 1–21 (MYPAHLLLLLAVCVSLLGASA). The propeptide occupies 22 to 27 (IPPLPL). Intrachain disulfides connect Cys38-Cys98, Cys54-Cys144, Cys56-Cys72, Cys71-Cys125, Cys78-Cys118, Cys87-Cys111, and Cys105-Cys116. 3 residues coordinate Ca(2+): Tyr55, Gly57, and Gly59. His75 is an active-site residue. Ca(2+) is bound at residue Asp76. Asp119 is an active-site residue.

It belongs to the phospholipase A2 family. Group I subfamily. D49 sub-subfamily. The cofactor is Ca(2+).

The protein localises to the secreted. It catalyses the reaction a 1,2-diacyl-sn-glycero-3-phosphocholine + H2O = a 1-acyl-sn-glycero-3-phosphocholine + a fatty acid + H(+). Functionally, PLA2 catalyzes the calcium-dependent hydrolysis of the 2-acyl groups in 3-sn-phosphoglycerides. This chain is Basic phospholipase A2 PC10, found in Laticauda laticaudata (Blue-ringed sea krait).